The chain runs to 276 residues: Large ribosomal subunit protein uL2 (276 aa).

2 disordered regions span residues 1 to 20 (MGIKKYNPTTNGRRNMTTND) and 219 to 276 (TVRG…RRKK). The span at 7–20 (NPTTNGRRNMTTND) shows a compositional bias: polar residues.

Belongs to the universal ribosomal protein uL2 family. In terms of assembly, part of the 50S ribosomal subunit. Forms a bridge to the 30S subunit in the 70S ribosome.

Functionally, one of the primary rRNA binding proteins. Required for association of the 30S and 50S subunits to form the 70S ribosome, for tRNA binding and peptide bond formation. It has been suggested to have peptidyltransferase activity; this is somewhat controversial. Makes several contacts with the 16S rRNA in the 70S ribosome. The polypeptide is Large ribosomal subunit protein uL2 (Bacillus mycoides (strain KBAB4) (Bacillus weihenstephanensis)).